We begin with the raw amino-acid sequence, 115 residues long: Disintegrin EC6 subunit alpha (115 aa).

An N-terminal signal peptide occupies residues 1-20 (MIQVLLVIICLAVFPYQGSS). A propeptide spanning residues 21–47 (IILESGNINDYEIVYPKKVAVLPTGAM) is cleaved from the precursor. The Disintegrin domain maps to 48–112 (NSVHPCCDPV…DCPRNRYKGK (65 aa)). Disulfide bonds link Cys-53/Cys-76, Cys-67/Cys-73, Cys-72/Cys-97, and Cys-85/Cys-104. A Cell attachment site; atypical (MLD) motif is present at residues 89–91 (MLD).

Belongs to the disintegrin family. Dimeric disintegrin subfamily. In terms of assembly, heterodimer with subunit beta; disulfide-linked. As to expression, expressed by the venom gland.

It is found in the secreted. In terms of biological role, potently inhibits adhesion of alpha-4/beta-1 (ITGA4/ITGB1) and alpha-9/beta-1 (ITGA9/ITGB1) integrins to VCAM1, and adhesion of alpha-5/beta-1 (ITGA5/ITGB1) integrin to fibronectin. Has a much less effect on alpha-IIb/beta-3 (ITGA2B/ITGB3) integrin. Also potently inhibits neutrophil migration across TNF-alpha-activated human umbilical endothelial cells. The polypeptide is Disintegrin EC6 subunit alpha (Echis carinatus sochureki (Saw-scaled viper)).